A 226-amino-acid chain; its full sequence is Cytidylate kinase (226 aa).

An ATP-binding site is contributed by 12 to 20 (GPSGAGKGT).

Belongs to the cytidylate kinase family. Type 1 subfamily.

It localises to the cytoplasm. It carries out the reaction CMP + ATP = CDP + ADP. The catalysed reaction is dCMP + ATP = dCDP + ADP. The chain is Cytidylate kinase from Xanthomonas campestris pv. campestris (strain B100).